A 478-amino-acid polypeptide reads, in one-letter code: UDP-N-acetylmuramate--L-alanine ligase (478 aa).

120 to 126 (GSHGKTT) is an ATP binding site.

It belongs to the MurCDEF family.

It is found in the cytoplasm. It carries out the reaction UDP-N-acetyl-alpha-D-muramate + L-alanine + ATP = UDP-N-acetyl-alpha-D-muramoyl-L-alanine + ADP + phosphate + H(+). It functions in the pathway cell wall biogenesis; peptidoglycan biosynthesis. In terms of biological role, cell wall formation. The polypeptide is UDP-N-acetylmuramate--L-alanine ligase (Rickettsia bellii (strain OSU 85-389)).